The primary structure comprises 300 residues: Ribonuclease HIII (300 aa).

The region spanning 86 to 300 is the RNase H type-2 domain; sequence RPRLGVDESG…FYEICDSTDI (215 aa). Asp-92, Glu-93, and Asp-196 together coordinate a divalent metal cation.

Belongs to the RNase HII family. RnhC subfamily. The cofactor is Mn(2+). Requires Mg(2+) as cofactor.

The protein localises to the cytoplasm. It catalyses the reaction Endonucleolytic cleavage to 5'-phosphomonoester.. In terms of biological role, endonuclease that specifically degrades the RNA of RNA-DNA hybrids. This is Ribonuclease HIII from Chlamydia abortus (strain DSM 27085 / S26/3) (Chlamydophila abortus).